The sequence spans 257 residues: Large ribosomal subunit protein uL2 (257 aa).

The disordered stretch occupies residues 207 to 230; the sequence is VEHPFGGGNHQHIGKPSTIRRDAP.

This sequence belongs to the universal ribosomal protein uL2 family. Component of the large ribosomal subunit.

It localises to the cytoplasm. Its function is as follows. Component of the large ribosomal subunit. The ribosome is a large ribonucleoprotein complex responsible for the synthesis of proteins in the cell. The polypeptide is Large ribosomal subunit protein uL2 (rpl8) (Danio rerio (Zebrafish)).